The sequence spans 432 residues: Cytochrome c biogenesis protein CcsB (432 aa).

A run of 3 helical transmembrane segments spans residues 14-34, 72-92, and 162-182; these read LRIA…GTAI, SSWF…CSWR, and VGPM…VWGS.

It belongs to the Ccs1/CcsB family. May interact with CcsA.

It localises to the cellular thylakoid membrane. In terms of biological role, required during biogenesis of c-type cytochromes (cytochrome c6 and cytochrome f) at the step of heme attachment. In Prochlorococcus marinus (strain MIT 9303), this protein is Cytochrome c biogenesis protein CcsB.